The sequence spans 593 residues: NADH-quinone oxidoreductase subunit C/D (593 aa).

Residues 1–184 (MTADNALYIP…DPYSLTLAKQ (184 aa)) form an NADH dehydrogenase I subunit C region. The segment at 208–593 (DYMFLNLGPN…IDFVMADVDR (386 aa)) is NADH dehydrogenase I subunit D.

It in the N-terminal section; belongs to the complex I 30 kDa subunit family. In the C-terminal section; belongs to the complex I 49 kDa subunit family. NDH-1 is composed of 13 different subunits. Subunits NuoB, CD, E, F, and G constitute the peripheral sector of the complex.

Its subcellular location is the cell inner membrane. It catalyses the reaction a quinone + NADH + 5 H(+)(in) = a quinol + NAD(+) + 4 H(+)(out). NDH-1 shuttles electrons from NADH, via FMN and iron-sulfur (Fe-S) centers, to quinones in the respiratory chain. The immediate electron acceptor for the enzyme in this species is believed to be ubiquinone. Couples the redox reaction to proton translocation (for every two electrons transferred, four hydrogen ions are translocated across the cytoplasmic membrane), and thus conserves the redox energy in a proton gradient. In Pseudomonas syringae pv. tomato (strain ATCC BAA-871 / DC3000), this protein is NADH-quinone oxidoreductase subunit C/D.